The chain runs to 456 residues: L-2-hydroxyglutarate dehydrogenase, mitochondrial (456 aa).

A mitochondrion-targeting transit peptide spans 1 to 20; it reads MLKTSFLLSKRNAVSLSRVL.

The protein belongs to the L2HGDH family. It depends on FAD as a cofactor.

It is found in the mitochondrion. It carries out the reaction (S)-2-hydroxyglutarate + A = 2-oxoglutarate + AH2. This chain is L-2-hydroxyglutarate dehydrogenase, mitochondrial, found in Nematostella vectensis (Starlet sea anemone).